A 335-amino-acid chain; its full sequence is Nucleoid-associated protein SeAg_B2375 (335 aa).

Belongs to the YejK family.

It localises to the cytoplasm. The protein resides in the nucleoid. This Salmonella agona (strain SL483) protein is Nucleoid-associated protein SeAg_B2375.